We begin with the raw amino-acid sequence, 345 residues long: Protein RecA (345 aa).

66 to 73 (GPESSGKT) is a binding site for ATP.

Belongs to the RecA family.

It localises to the cytoplasm. Functionally, can catalyze the hydrolysis of ATP in the presence of single-stranded DNA, the ATP-dependent uptake of single-stranded DNA by duplex DNA, and the ATP-dependent hybridization of homologous single-stranded DNAs. It interacts with LexA causing its activation and leading to its autocatalytic cleavage. The protein is Protein RecA of Acidithiobacillus ferrooxidans (strain ATCC 23270 / DSM 14882 / CIP 104768 / NCIMB 8455) (Ferrobacillus ferrooxidans (strain ATCC 23270)).